Here is a 626-residue protein sequence, read N- to C-terminus: Leucine aminopeptidase 2-1 (626 aa).

Substrate-binding positions include 134 to 136 and 259 to 264; these read QCQ and PYGGME. Residue histidine 288 participates in Zn(2+) binding. The active-site Proton acceptor is glutamate 289. 2 residues coordinate Zn(2+): histidine 292 and glutamate 311. The active-site Proton donor is the tyrosine 389.

Belongs to the peptidase M1 family. Zn(2+) serves as cofactor.

The protein resides in the cytoplasm. It is found in the nucleus. The catalysed reaction is an epoxide + H2O = an ethanediol. Functionally, aminopeptidase that preferentially cleaves di- and tripeptides. Also has low epoxide hydrolase activity (in vitro). Can hydrolyze the epoxide leukotriene LTA(4) but it forms preferentially 5,6-dihydroxy-7,9,11,14-eicosatetraenoic acid rather than the cytokine leukotriene B(4) as the product compared to the homologous mammalian enzyme (in vitro). This Scheffersomyces stipitis (strain ATCC 58785 / CBS 6054 / NBRC 10063 / NRRL Y-11545) (Yeast) protein is Leucine aminopeptidase 2-1 (LKA4).